Consider the following 419-residue polypeptide: Erythromycin esterase type II (419 aa).

In terms of biological role, this enzyme confers resistance to erythromycin through inactivation by hydrolyzing the lactone ring of the antibiotic. This is Erythromycin esterase type II (ereB) from Escherichia coli.